We begin with the raw amino-acid sequence, 185 residues long: Ribosome maturation factor RimM (185 aa).

One can recognise a PRC barrel domain in the interval Ser-103–Tyr-177.

Belongs to the RimM family. As to quaternary structure, binds ribosomal protein uS19.

It is found in the cytoplasm. Its function is as follows. An accessory protein needed during the final step in the assembly of 30S ribosomal subunit, possibly for assembly of the head region. Essential for efficient processing of 16S rRNA. May be needed both before and after RbfA during the maturation of 16S rRNA. It has affinity for free ribosomal 30S subunits but not for 70S ribosomes. The polypeptide is Ribosome maturation factor RimM (Petrotoga mobilis (strain DSM 10674 / SJ95)).